Reading from the N-terminus, the 186-residue chain is Probable GTP-binding protein EngB (186 aa).

The EngB-type G domain occupies Asp-18–Lys-186. Residues Gly-26–Ser-33, Gly-52–Leu-56, Asp-70–Gly-73, Thr-137–Asp-140, and Val-166–Ser-168 each bind GTP. Positions 33 and 54 each coordinate Mg(2+).

Belongs to the TRAFAC class TrmE-Era-EngA-EngB-Septin-like GTPase superfamily. EngB GTPase family. Mg(2+) serves as cofactor.

Necessary for normal cell division and for the maintenance of normal septation. This Mycoplasmopsis pulmonis (strain UAB CTIP) (Mycoplasma pulmonis) protein is Probable GTP-binding protein EngB.